The following is a 459-amino-acid chain: Bifunctional protein GlmU (459 aa).

The tract at residues 1–230 is pyrophosphorylase; sequence MSNRFAVILA…FDETLGVNDR (230 aa). UDP-N-acetyl-alpha-D-glucosamine contacts are provided by residues 9-12, lysine 23, glutamine 73, and 78-79; these read LAAG and GT. A Mg(2+)-binding site is contributed by aspartate 103. Glycine 140, glutamate 155, asparagine 170, and asparagine 228 together coordinate UDP-N-acetyl-alpha-D-glucosamine. Residue asparagine 228 participates in Mg(2+) binding. The interval 231-251 is linker; that stretch reads VALSQAEVIMKNRINHKNMVN. The interval 252–459 is N-acetyltransferase; that stretch reads GVTIIDPSNT…VDQLLNKKKS (208 aa). Residues arginine 333 and lysine 351 each contribute to the UDP-N-acetyl-alpha-D-glucosamine site. The Proton acceptor role is filled by histidine 363. Tyrosine 366 and asparagine 377 together coordinate UDP-N-acetyl-alpha-D-glucosamine. Acetyl-CoA contacts are provided by residues 386-387, alanine 423, and arginine 440; that span reads NY.

It in the N-terminal section; belongs to the N-acetylglucosamine-1-phosphate uridyltransferase family. The protein in the C-terminal section; belongs to the transferase hexapeptide repeat family. In terms of assembly, homotrimer. It depends on Mg(2+) as a cofactor.

It localises to the cytoplasm. It catalyses the reaction alpha-D-glucosamine 1-phosphate + acetyl-CoA = N-acetyl-alpha-D-glucosamine 1-phosphate + CoA + H(+). The enzyme catalyses N-acetyl-alpha-D-glucosamine 1-phosphate + UTP + H(+) = UDP-N-acetyl-alpha-D-glucosamine + diphosphate. Its pathway is nucleotide-sugar biosynthesis; UDP-N-acetyl-alpha-D-glucosamine biosynthesis; N-acetyl-alpha-D-glucosamine 1-phosphate from alpha-D-glucosamine 6-phosphate (route II): step 2/2. It functions in the pathway nucleotide-sugar biosynthesis; UDP-N-acetyl-alpha-D-glucosamine biosynthesis; UDP-N-acetyl-alpha-D-glucosamine from N-acetyl-alpha-D-glucosamine 1-phosphate: step 1/1. It participates in bacterial outer membrane biogenesis; LPS lipid A biosynthesis. Its function is as follows. Catalyzes the last two sequential reactions in the de novo biosynthetic pathway for UDP-N-acetylglucosamine (UDP-GlcNAc). The C-terminal domain catalyzes the transfer of acetyl group from acetyl coenzyme A to glucosamine-1-phosphate (GlcN-1-P) to produce N-acetylglucosamine-1-phosphate (GlcNAc-1-P), which is converted into UDP-GlcNAc by the transfer of uridine 5-monophosphate (from uridine 5-triphosphate), a reaction catalyzed by the N-terminal domain. The protein is Bifunctional protein GlmU of Bacillus cytotoxicus (strain DSM 22905 / CIP 110041 / 391-98 / NVH 391-98).